The sequence spans 106 residues: Iron-sulfur cluster assembly protein CyaY (106 aa).

Belongs to the frataxin family.

Its function is as follows. Involved in iron-sulfur (Fe-S) cluster assembly. May act as a regulator of Fe-S biogenesis. This is Iron-sulfur cluster assembly protein CyaY from Escherichia coli O6:H1 (strain CFT073 / ATCC 700928 / UPEC).